The chain runs to 433 residues: 3-phosphoshikimate 1-carboxyvinyltransferase (433 aa).

3-phosphoshikimate contacts are provided by Lys23, Ser24, and Arg28. Residue Lys23 coordinates phosphoenolpyruvate. The phosphoenolpyruvate site is built by Gly95 and Arg123. Residues Ser170, Ser171, Gln172, Ser198, Asp317, and Lys344 each coordinate 3-phosphoshikimate. Gln172 contributes to the phosphoenolpyruvate binding site. Asp317 (proton acceptor) is an active-site residue. Phosphoenolpyruvate contacts are provided by Arg348, Arg391, and Lys416.

Belongs to the EPSP synthase family. Monomer.

The protein localises to the cytoplasm. The catalysed reaction is 3-phosphoshikimate + phosphoenolpyruvate = 5-O-(1-carboxyvinyl)-3-phosphoshikimate + phosphate. Its pathway is metabolic intermediate biosynthesis; chorismate biosynthesis; chorismate from D-erythrose 4-phosphate and phosphoenolpyruvate: step 6/7. Functionally, catalyzes the transfer of the enolpyruvyl moiety of phosphoenolpyruvate (PEP) to the 5-hydroxyl of shikimate-3-phosphate (S3P) to produce enolpyruvyl shikimate-3-phosphate and inorganic phosphate. This is 3-phosphoshikimate 1-carboxyvinyltransferase from Neisseria meningitidis serogroup C / serotype 2a (strain ATCC 700532 / DSM 15464 / FAM18).